We begin with the raw amino-acid sequence, 471 residues long: Arginine biosynthesis bifunctional protein ArgJ, mitochondrial (471 aa).

Substrate contacts are provided by Thr-201, Lys-230, Thr-241, Glu-328, Asn-466, and Thr-471. Catalysis depends on Thr-241, which acts as the Nucleophile.

The protein belongs to the ArgJ family. In terms of assembly, heterodimer of an alpha and a beta chain. Post-translationally, the alpha and beta chains are autoproteolytically processed from a single precursor protein within the mitochondrion.

The protein localises to the mitochondrion matrix. It catalyses the reaction N(2)-acetyl-L-ornithine + L-glutamate = N-acetyl-L-glutamate + L-ornithine. It carries out the reaction L-glutamate + acetyl-CoA = N-acetyl-L-glutamate + CoA + H(+). The protein operates within amino-acid biosynthesis; L-arginine biosynthesis; L-ornithine and N-acetyl-L-glutamate from L-glutamate and N(2)-acetyl-L-ornithine (cyclic): step 1/1. It functions in the pathway amino-acid biosynthesis; L-arginine biosynthesis; N(2)-acetyl-L-ornithine from L-glutamate: step 1/4. Catalyzes two activities which are involved in the cyclic version of arginine biosynthesis: the synthesis of acetylglutamate from glutamate and acetyl-CoA, and of ornithine by transacetylation between acetylornithine and glutamate. The protein is Arginine biosynthesis bifunctional protein ArgJ, mitochondrial of Ajellomyces capsulatus (strain NAm1 / WU24) (Darling's disease fungus).